The sequence spans 125 residues: Small ribosomal subunit protein eS8 (125 aa).

The tract at residues Met-1–Arg-20 is disordered.

This sequence belongs to the eukaryotic ribosomal protein eS8 family. Part of the 30S ribosomal subunit.

The protein is Small ribosomal subunit protein eS8 (rps8e) of Archaeoglobus fulgidus (strain ATCC 49558 / DSM 4304 / JCM 9628 / NBRC 100126 / VC-16).